Reading from the N-terminus, the 578-residue chain is MLSCNICGETVTSEPDMKAHLIVHMESEIICPFCKLSGVNYDEMCFHIETAHFEQNTLERNFERINTVQYGTSDNKKDNTLQCGMEVNSSILSGCASNHPKNSAQNLTKDSTLKHEGFYSENLTESRKFLKSREKQSSLTEIKGSVYETTYSPPECPFCGKIEEHSEDMETHVKTKHANLLDIPLEDCDQPLYDCPMCGLICTNYHILQEHVDLHLEENSFQQGMDRVQCSGDLQLAHQLQQEEDRKRRSEESRQEIEEFQKLQRQYGLDNSGGYKQQQLRNMEIEVNRGRMPPSEFHRRKADMMESLALGFDDGKTKTSGIIEALHRYYQNAATDVRRVWLSSVVDHFHSSLGDKGWGCGYRNFQMLLSSLLQNDAYNDCLKGMLIPCIPKIQSMIEDAWKEGFDPQGASQLNNRLQGTKAWIGACEVYILLTSLRVKCHIVDFHKSTGPLGTHPRLFEWILNYYSSEGEGSPKVVCTSKPPIYLQHQGHSRTVIGIEEKKNRTLCLLILDPGCPSREMQKLLKQDIEASSLKQLRKSMGNLKHKQYQILAVEGALSLEEKLARRQASQVFTAEKIP.

The C2H2-type 1 zinc-finger motif lies at 2 to 24 (LSCNICGETVTSEPDMKAHLIVH). The C2H2-type 2; atypical zinc finger occupies 29 to 52 (IICPFCKLSGVNYDEMCFHIETAH). C2H2-type zinc fingers lie at residues 154–177 (PECP…KTKH) and 193–215 (YDCP…VDLH). Residues 226–248 (DRVQCSGDLQLAHQLQQEEDRKR) are MIU. The zUBD/ZHA stretch occupies residues 249-274 (RSEESRQEIEEFQKLQRQYGLDNSGG). N6-acetyllysine is present on Lys-262. Cys-360 acts as the Nucleophile in catalysis. His-491 functions as the Proton acceptor in the catalytic mechanism. Asp-512 is a catalytic residue.

The protein belongs to the peptidase C78 family. ZUFSP subfamily. As to quaternary structure, interacts with RPA1 and RPA2.

It localises to the cytoplasm. The protein resides in the nucleus. The enzyme catalyses Thiol-dependent hydrolysis of ester, thioester, amide, peptide and isopeptide bonds formed by the C-terminal Gly of ubiquitin (a 76-residue protein attached to proteins as an intracellular targeting signal).. Its function is as follows. Deubiquitinase with endodeubiquitinase activity that specifically interacts with and cleaves 'Lys-63'-linked long polyubiquitin chains. Shows only weak activity against 'Lys-11' and 'Lys-48'-linked chains. Plays an important role in genome stability pathways, functioning to prevent spontaneous DNA damage and also promote cellular survival in response to exogenous DNA damage. Modulates the ubiquitination status of replication protein A (RPA) complex proteins in response to replication stress. This is Zinc finger-containing ubiquitin peptidase 1 from Homo sapiens (Human).